Reading from the N-terminus, the 166-residue chain is MYKSVINIVLFCPEIPNNTGNIVRSCTAFKANLHLIKPYGFFLNDKRMVRAGLNCWDKIQLFEHKSWEHFLQATTENKTIWLLTKSGDKTPDQICMTNKLPNELYFVFGQETKGLPKTIMDNFKQNQIRIPIWNSVRSINLANAVVCILYEYSKQNQYSNLDKQCA.

S-adenosyl-L-methionine is bound by residues leucine 83, glycine 109, isoleucine 130, and serine 138.

The protein belongs to the class IV-like SAM-binding methyltransferase superfamily. RNA methyltransferase TrmH family. TrmL subfamily.

The protein resides in the cytoplasm. The catalysed reaction is cytidine(34) in tRNA + S-adenosyl-L-methionine = 2'-O-methylcytidine(34) in tRNA + S-adenosyl-L-homocysteine + H(+). It carries out the reaction 5-carboxymethylaminomethyluridine(34) in tRNA(Leu) + S-adenosyl-L-methionine = 5-carboxymethylaminomethyl-2'-O-methyluridine(34) in tRNA(Leu) + S-adenosyl-L-homocysteine + H(+). In terms of biological role, could methylate the ribose at the nucleotide 34 wobble position in tRNA. This is Putative tRNA (cytidine(34)-2'-O)-methyltransferase from Mycoplasma genitalium (strain ATCC 33530 / DSM 19775 / NCTC 10195 / G37) (Mycoplasmoides genitalium).